The sequence spans 318 residues: MSSFNTQNKNVLQTPIPAPTPQSQLKQFVIGGLAGMLSSAFTHPIDSLKVRMQLQGEGTGVGPKRGALKMLVHINQTEGFFTLYKGLSASLLRQATYTTTRFGLYDLIKDIVAKDDKPLPFTQKIMVGMLSGAGGAIVGTPADLTMVRMQADGKLPFNLRRNYKNVFDGIFRISKEEGIISLWKGCSPNLIRAMFMTAGQVSSYDQTKQLMLASGYFHDDIKTHLIASTTAAFVAAVATSPLDVIKTRIMNSPKTVTGELQYKGTFDCLSKTLRAEGFKAFYKGFNPYFMRLGPQTILTFIFVEQLNILWKKSQSYFK.

Solcar repeat units follow at residues 22 to 111 (QSQL…IKDI), 119 to 210 (LPFT…TKQL), and 219 to 309 (DDIK…LNIL). Helical transmembrane passes span 28–48 (FVIGGLAGMLSSAFTHPIDSL), 79–99 (GFFTLYKGLSASLLRQATYTT), 125–145 (IMVGMLSGAGGAIVGTPADLT), 185–205 (GCSPNLIRAMFMTAGQVSSYD), 225–245 (LIASTTAAFVAAVATSPLDVI), and 281–301 (FYKGFNPYFMRLGPQTILTFI).

Belongs to the mitochondrial carrier (TC 2.A.29) family.

It is found in the mitochondrion inner membrane. Its function is as follows. Mitochondrial solute carriers shuttle metabolites, nucleotides, and cofactors through the mitochondrial inner membrane. Catalyzes the transport of 2-oxoglutarate across the inner mitochondrial membrane in an electroneutral exchange for malate or other dicarboxylic acids, and plays an important role in several metabolic processes, including the malate-aspartate shuttle, the oxoglutarate/isocitrate shuttle, in gluconeogenesis from lactate, and in nitrogen metabolism. In Dictyostelium discoideum (Social amoeba), this protein is Probable mitochondrial 2-oxoglutarate/malate carrier protein (ucpC).